We begin with the raw amino-acid sequence, 234 residues long: UPF0758 protein Smal_0281 (234 aa).

The 123-residue stretch at valine 103–leucine 225 folds into the MPN domain. Zn(2+) is bound by residues histidine 174, histidine 176, and aspartate 187. The short motif at histidine 174 to aspartate 187 is the JAMM motif element.

This sequence belongs to the UPF0758 family.

This is UPF0758 protein Smal_0281 from Stenotrophomonas maltophilia (strain R551-3).